Here is a 923-residue protein sequence, read N- to C-terminus: Rap guanine nucleotide exchange factor 3 (923 aa).

Position 79 is a phosphoserine (Ser-79). The region spanning 110-186 is the DEP domain; it reads ATCPNLIRDR…RDAQFYRFPG (77 aa). Positions 218-242 are interaction with PDE3B; sequence TVALRKPPGQRTDEELDLIFEELLH. 3',5'-cyclic AMP-binding positions include 311–314 and 321–322; these read GQLA and RA. The region spanning 384–518 is the N-terminal Ras-GEF domain; that stretch reads NRYTVMSGTP…EQWPERRRCH (135 aa). The interval 398-422 is interaction with PDE3B; it reads ELLLEAMGPDSSAHDPTETFLSDFL. A phosphoserine mark is found at Ser-528 and Ser-864. In terms of domain architecture, Ras-GEF spans 662-889; it reads SAKDLAGQLT…ARISTCSEQS (228 aa).

In terms of assembly, interacts with PDE3B and PIK3R6; form a signaling complex that regulates phosphatidylinositol 3-kinase gamma in angiogenesis. Widely expressed with highest levels in adult kidney, heart, thyroid and brain, and fetal kidney.

It localises to the endomembrane system. Functionally, guanine nucleotide exchange factor (GEF) for RAP1A and RAP2A small GTPases that is activated by binding cAMP. Through simultaneous binding of PDE3B to RAPGEF3 and PIK3R6 is assembled in a signaling complex in which it activates the PI3K gamma complex and which is involved in angiogenesis. Plays a role in the modulation of the cAMP-induced dynamic control of endothelial barrier function through a pathway that is independent on Rho-mediated signaling. Required for the actin rearrangement at cell-cell junctions, such as stress fibers and junctional actin. The polypeptide is Rap guanine nucleotide exchange factor 3 (RAPGEF3) (Homo sapiens (Human)).